Consider the following 928-residue polypeptide: Isoleucine--tRNA ligase (928 aa).

A 'HIGH' region motif is present at residues 57 to 67; that stretch reads PFANGNIHMGH. Glu-552 serves as a coordination point for L-isoleucyl-5'-AMP. The 'KMSKS' region signature appears at 593–597; sequence KMSKS. Lys-596 is an ATP binding site. Zn(2+) is bound by residues Cys-887, Cys-890, Cys-907, and Cys-910.

This sequence belongs to the class-I aminoacyl-tRNA synthetase family. IleS type 1 subfamily. In terms of assembly, monomer. Requires Zn(2+) as cofactor.

It localises to the cytoplasm. The catalysed reaction is tRNA(Ile) + L-isoleucine + ATP = L-isoleucyl-tRNA(Ile) + AMP + diphosphate. Catalyzes the attachment of isoleucine to tRNA(Ile). As IleRS can inadvertently accommodate and process structurally similar amino acids such as valine, to avoid such errors it has two additional distinct tRNA(Ile)-dependent editing activities. One activity is designated as 'pretransfer' editing and involves the hydrolysis of activated Val-AMP. The other activity is designated 'posttransfer' editing and involves deacylation of mischarged Val-tRNA(Ile). The protein is Isoleucine--tRNA ligase of Lacticaseibacillus casei (strain BL23) (Lactobacillus casei).